The following is a 477-amino-acid chain: Glutamate--tRNA ligase 2 (477 aa).

The 'HIGH' region signature appears at 12-22 (PSPTGRMHLGN). Cys109, Cys111, Cys136, and His138 together coordinate Zn(2+). A 'KMSKS' region motif is present at residues 253 to 257 (PLSKR). An ATP-binding site is contributed by Lys256.

The protein belongs to the class-I aminoacyl-tRNA synthetase family. Glutamate--tRNA ligase type 1 subfamily. In terms of assembly, monomer. Zn(2+) is required as a cofactor.

The protein localises to the cytoplasm. It carries out the reaction tRNA(Glu) + L-glutamate + ATP = L-glutamyl-tRNA(Glu) + AMP + diphosphate. Catalyzes the attachment of glutamate to tRNA(Glu) in a two-step reaction: glutamate is first activated by ATP to form Glu-AMP and then transferred to the acceptor end of tRNA(Glu). This Alkalilimnicola ehrlichii (strain ATCC BAA-1101 / DSM 17681 / MLHE-1) protein is Glutamate--tRNA ligase 2.